Here is a 160-residue protein sequence, read N- to C-terminus: Ribosomal RNA large subunit methyltransferase H (160 aa).

Residues leucine 78, glycine 109, and leucine 128 to leucine 133 each bind S-adenosyl-L-methionine.

It belongs to the RNA methyltransferase RlmH family. As to quaternary structure, homodimer.

The protein resides in the cytoplasm. It carries out the reaction pseudouridine(1915) in 23S rRNA + S-adenosyl-L-methionine = N(3)-methylpseudouridine(1915) in 23S rRNA + S-adenosyl-L-homocysteine + H(+). Specifically methylates the pseudouridine at position 1915 (m3Psi1915) in 23S rRNA. This chain is Ribosomal RNA large subunit methyltransferase H, found in Alcanivorax borkumensis (strain ATCC 700651 / DSM 11573 / NCIMB 13689 / SK2).